The primary structure comprises 203 residues: CCG-binding protein 1 (203 aa).

The tract at residues 156–178 is disordered; it reads IPDGLPKSEQELEEEEKSKMPDS. A compositionally biased stretch (basic and acidic residues) spans 161-175; that stretch reads PKSEQELEEEEKSKM.

As to quaternary structure, homotetramer. Interacts with MEE12/CCG, MED7A, MED7B, MED9, AGL49, AGL53, AGL75, AGL80, AGL81, AGL82, AGL103 and NRPB1 (via CTD). Expressed in roots, leaves, stems and flowers. Expressed in the central cell of mature ovules.

The protein resides in the nucleus. It is found in the cytoplasm. In terms of biological role, required for the development of the one-cell zygote and endosperm in embryos. Required for micropylar pollen tube guidance, but has no effect on ovule development and gametophytic cell fate specification. May connect transcription factors and the Pol II machinery to regulate pollen tube attraction, via its interactions with AGAMOUS-like (AGL) transcription factors, MEE14/CCG and the Mediator complex. This chain is CCG-binding protein 1, found in Arabidopsis thaliana (Mouse-ear cress).